A 4249-amino-acid chain; its full sequence is MGHLWLSGTWFLFGLLWCAADSHKGSSETIPKVTEVIPKYGSINGATRLTIKGEGFSQASQFNYGADNTELGNHVQLVSSFQSITCDVEKDSSHSTQITCYTRAMPEDTYSVRVSVDGVPVAENNTCKGVASSWACSFSTKSFRTPTIRSITPLSGTPGTLITIKGRLFTDVYGSNTALSSNGRNVRILRIYIGGMPCELLIPHSDDLYGLKLDHANGDTGSVTCKTTGTYIGHHNVSFILDSDYGRSFPEKMTYFVSSLNKISMFQTYPEVVMVSPSKGSTEGGTLLTIHGHFFDQTDLPVRVLVGGQACAILNVTENTIYCKTPPKPHILKATYPGGRGLKVEVWNNSRPAHLEDILEYNEHTPGYMGATWTDSASYVWPIEQDTFVARISGFLVPPDSDVYRFYIRGDDRYAIYFSQTGRTEDKVRIAYYSGNANTYFSNSTQRSDEIHLQKGKEYYIEILLQEYTLSAFVDVGLYQYKNVFTEQQTGDALNEEQVIKSQSTVVPEVQIITLENWETADVTNEVQQVTVTSPCVGANSCSLSQYRFIYNMEKTVWLPADASDFTLKSALNDLWSIKPDSVQVTSKRDLQSYIYTITFVSTRGDFDLLGYEVFEGSNVTLSITEQTKGKPNLETFTLNWDGIASKPLTPESSEAEFQVAVEEMVSAKCPPEIAHLEEGFLVKYFRDYETDFELEHINRGQKTAETDAYCGRYSLKNPAVLFDSTDVKPNKSPYGDILLFPYNQLCLAYKGSLANFIDLKFKYQDSGKIIRSADVQFEYNFASGNKWTYTCIDLLDFLQTKYAGTSFSLQRITLQKSSEFQSIYVDAVYIGQTPTVSVLDDMPKRRPPALANKGIFLKHFQVNRTKLNGSAMTIQYSVTITSYNCSHNIPMMAVSFGQIITNETKNELVYRGNNWPGESKIRIQKIQEASPPISGSFDVQAYGHTLKGIPAAVPAADLQFALQSLEEIEQVSVNREGTCAGYSWSIRWTSPRGKQPLLQINDSNIIGEKANVTVTTIKEGGLFRQRIPGDMLRTLNQQPQVEVYVNGIPAKCSGDCGFTWDAMITPLILTTTPSEGSYAESTILTIAGSGFSPTSAVSVSVGSTRCSLLSVEENEIKCQILNGSAGHVPVAVSIADVGLAQNLEGEGSHFIYRSQISHVWPDSGSLAGGTLLTISGFGFSENSTVLVGNETCNVIEGDLNRITCRTSKRIEGTVDISVITNGIQVTAKDSFSYSCLQTPVVTDFSPKERTVLGKVNLTIKGYNFGNELAQNTVYVGRKHCQVLHSNFTDITCLLPTLPPGKHDIYVKVRNWGLASTRNKLNASILYILEVIHMFPQRGSLYGGTEITIMGFGFSTIPTENSVLLGSFPCDITSSSENVIKCTLHSTGTVFRITNNGSHLVHGLGYAWSPSVLNVTVGDTVVWSWQAHPFLRGIGYRIFSVSSPGSVTYDDKGFTNGRQKSASGSFSYQFTSPGIYYYSSGYVDEAHSISLQGVINVFPAEARHIPLYLFVGNIEATYVPAGPAHLQLASTAAGCLATEPLCGLNDTRVKHSNKLFFELSNCISPSIINITPSTGTANELITIIGHGFSSLPCANKVTIGSYPCVVEESSENSIICHIDPQNSMNVGIREIVTLIVYNLGTAINTLTKAFDRRFVLLPNIDMVMPKAGSTTGMTRVTIQGSGFMSSPEGVEVFMGDFPCKVLSVTYTAIECETSPAPQQLVLVDILIHGVPAQCQSNCSFSYLENIAPYVTGIFPNSIQGYGNVLIKGERFGTVLEEISIFIGSQQFRVIDVNENNITVLMTPLEAGLHSLSVVVGSKGLALGNLTISSPAVASVSPTSGSIAGGTTLMITGNGFSPGNTTVTVGDQPCQITFISSSEVYCSTPAGRAGTANLKISVNAIIYPPLSFTYAMEDTPFLKRIIPNRGLPGTEVEITGSNLGFAISDVSVMIKESVCNVTTVNDTVLQCTVGEHAGGIFPVTMLHKTKGSAVSSVAFEYPLSIQNIYPTQGSFGGGQTLTVTGMGFDPWNSTILVCNSECAVDKLRSNSTTLFCVIPPNNGKGHDQVCGVSVVNGKDSSHSTKLFTYTLSLTPLITEISPRRGSTAGGTRLTVTGSGFSENTQGVQVFVGNSKCDIQYSNKTHIVCMTSVHVPSGWVPVHVNIKNIGLAKLENADFLYADVWSANSSWGGSPPPEEGSLAVITKGQIILLDQSTPILKMLLIQGGTLIFDEANIELQAENILITDGGVLQIGTEASPFQHRAVITLHGHLRSPELPVYGAKTLGVREGTLDLHGLPIPVVWTRLTHTANAGEWTLTVQEAVTWKAGDNIVIASTGHRHSQAENEKRTIASVSADGMHITLTKPLNYTHLGITTTLPDGTVFEARAEVGILTRNILIRGSDNVEWNDKIPSCPDGFDTGEFATQTCLQGKFGEEMGSDQFGGCIMLHAPLPGADMVTGRIEYVEVFHAGQSFRLGRYPIHWHLLGDLQFKSYVKGCAIHQSYNRAITIHNTHHLLVERNIIYDIKGGAFFIEDGIEHGNILQYNLAVFVQQSTSLLNDDVTPAAFWVTNPNNTIRHNAAAGGTHFGFWYRMNDHPDGPSFDRNICQKRIPLGEFFNNTVHSQGWFGLWIFEEYFPMQTGSCTSTVPVPAIFNSLTVWNCQKGAEWVNGGALQFHNFVMVNNNEAGIETKRILAPYVGGWGESNGAVIKNAKIVGHLDELGMGPTFCTSKGLVLPFSQGLTVSSVHFMNFDRHACVALGVTSITGVCNDRCGGWSAKFVGIRYFHAPNKGGFRWEHEAVLIDVDGSLTGHRGHTVVPHSSLLDPSHCTQEPAWSIGFPGSICDASVSFHRLAFNKPSPVSLLEKDVVLSDSFGTSIVPFQKKRLTHMSGWMALIPNANHINWYFKGVEHLTNISYTSTFYGFKEEDYVIISHNFTQNPDMFNVVDMRNGSANPLNWNSSKNGDWHLEANTSTLYYLVSGRSDLPQSQPISGTLDPGVKDVIINFQAYCCVLQDCFPVHPPSRKPIPRKRPAAYNLWSNESFWQSSPENNYTVPRPGANVIIPEGTWIVADVDIPPVERLIIWGVLEMEDKSEIGVAGPTYRRVVLNATYISVQGGRLIGGWEDNPFKGELQIVLRGNHSTPEWAFPDGPNQGAKVLGVFGELDLHGLPHSVYKTKLLETAEAGSKILSLVDAVDWQEGEDVVITTTSYDLHQTEIRRIAKILHGHKILILNDSLSYTHLAERQWISGTAQSYTLSADVGILSRNIKIVGDDYSVLSKDSFGARILVGSFTGNMMTFKGNARISNVEFHHSGQEGYRDSTDPRYAVTFLNLGQIQDHGLSYVRGCAFHHVFSPAIGVFGTDGVDIDDNIIYFTVGEGIRIWGDANRVRGNLVTLSVWPGTYQNRKDLSSTLWHAAIEINRGTNTVLQNNVVAGFGRVGYRIDGEPCSSQANSMENWFNNEAHGGLYGIYMNQDGLPGCSLIQGFTIWTCWDYGIYFQTTESVHIYNVTLVNNGMSIFSMVYMPPSVSHKISSKTVKIKNSLIVGSSPEFNCSDVLTNDSPDVELTSAHRSSRPPSGGRSGICWPTFASAHNMAPRKPHAGIMSYNAISGLLHVSDSTFVGFKDVCSGETNVIFITNPLNEDLQHPIHVKNVQLIDTIEQSKVFIHRPDISKVNPSDCVDMVCDAKRKSFLRDLDGSFLGNSGSVIPQAEYEWDGNSQLGIGDYRIPKAMLTYLNGSRIPVTEKAPHKGIIRDATCKYIPEWQSYQCSGMEYAMMVLESLDSDTETRRLSPVAIMSNGYVDLINGPQDHGWCAGYTCQRRLSLFHGIVALNKKYEVYFTGTSPQNLRLMLLNVEHNKAVLVGIFFSTLQRLDVYVNNSLVCPKNTAWNAQKKHCELERHLSTEQFLPNLGSTVPGENYFDRTYQMLYLFLKGTTPVEVHTATVIFVSFHLPVMTADEFFSSHNLVRNLALFLKIPSDKIRVSRIIGASLRKKRSTGHIMEFEIGAAPTQFLSNSTTGQMQLSELQEITDSLGQAVVLGKISTILGFNISSMSITSPIPQPTDSGWIKVTAQPVERSAFPVHYLALVSSLSVVAQPVAAQPGQPFPQQPSVKAVDPEGNCVSVGITSLTLKAILKDSNNNQVGGLSGNTTIPFSTCWANYTDLTPHRTGKNYKIEFVLDNTVRVDSRPFSLSAQSVPGGSGSSPGSGSSSSGHSKASSVGTPVQTLAVITACLVGRLLLLEVFMAAVFILNTTVGIN.

Residues 1–20 form the signal peptide; that stretch reads MGHLWLSGTWFLFGLLWCAA. Residues 21 to 4222 are Extracellular-facing; it reads DSHKGSSETI…TPVQTLAVIT (4202 aa). 14 IPT/TIG domains span residues 31 to 132, 146 to 255, 270 to 361, 1067 to 1153, 1155 to 1234, 1240 to 1323, 1329 to 1468, 1565 to 1648, 1658 to 1742, 1748 to 1827, 1830 to 1909, 1915 to 1996, 1998 to 2084, and 2090 to 2175; these read PKVT…GVAS, PTIR…KMTY, PEVV…ILEY, PLIL…HFIY, SQIS…SFSY, PVVT…KLNA, LEVI…SFSY, PSII…TLTK, PNID…SFSY, PYVT…NLTI, PAVA…SFTY, PFLK…AFEY, LSIQ…LFTY, and PLIT…DFLY. Positions 337 to 492 constitute a PA14 domain; the sequence is PGGRGLKVEV…NVFTEQQTGD (156 aa). Thr1297 and Thr1359 each carry an O-linked (GalNAc...) threonine glycan. A glycan (O-linked (GalNAc...) threonine) is linked at Thr1838. One can recognise a G8 1 domain in the interval 2183 to 2303; sequence SSWGGSPPPE…IPVVWTRLTH (121 aa). 5 PbH1 repeats span residues 2484–2506, 2507–2529, 2565–2587, 2664–2686, and 2732–2755; these read QFKS…TIHN, THHL…FIED, NPNN…WYRM, GGAL…ETKR, and SQGL…ALGV. In terms of domain architecture, G8 2 spans 3035–3173; it reads SFWQSSPENN…HSVYKTKLLE (139 aa). 5 PbH1 repeats span residues 3292 to 3314, 3354 to 3376, 3415 to 3437, 3470 to 3492, and 3493 to 3514; these read KGNA…RDST, TDGV…RIWG, GTNT…RIDG, PGCS…YFQT, and TESV…FSMV. Thr3735 carries an O-linked (GalNAc...) threonine glycan. Residues 4183–4208 form a disordered region; it reads LSAQSVPGGSGSSPGSGSSSSGHSKA. Low complexity predominate over residues 4197–4208; sequence GSGSSSSGHSKA. A helical membrane pass occupies residues 4223–4243; sequence ACLVGRLLLLEVFMAAVFILN. Residues 4244–4249 lie on the Cytoplasmic side of the membrane; sequence TTVGIN.

Expressed in neurons in the hippocampus and the cerebral cortex (at protein level). Transiently expressed at high levels in inner ear hair cells, predominantly in outer hair cells, during early postnatal development (at protein level).

Its subcellular location is the membrane. The protein resides in the cell projection. The protein localises to the stereocilium membrane. In terms of biological role, component of hair-cell stereocilia coat. Required for normal hearing. In Mus musculus (Mouse), this protein is Fibrocystin-L (Pkhd1l1).